A 385-amino-acid chain; its full sequence is Lipoyl synthase, mitochondrial (385 aa).

[4Fe-4S] cluster-binding residues include Cys-107, Cys-112, Cys-118, Cys-137, Cys-141, Cys-144, and Ser-352. The 220-residue stretch at 122–341 folds into the Radical SAM core domain; that stretch reads KKSEATATIM…RDTALKMGFL (220 aa).

Belongs to the radical SAM superfamily. Lipoyl synthase family. It depends on [4Fe-4S] cluster as a cofactor.

The protein localises to the mitochondrion. The catalysed reaction is [[Fe-S] cluster scaffold protein carrying a second [4Fe-4S](2+) cluster] + N(6)-octanoyl-L-lysyl-[protein] + 2 oxidized [2Fe-2S]-[ferredoxin] + 2 S-adenosyl-L-methionine + 4 H(+) = [[Fe-S] cluster scaffold protein] + N(6)-[(R)-dihydrolipoyl]-L-lysyl-[protein] + 4 Fe(3+) + 2 hydrogen sulfide + 2 5'-deoxyadenosine + 2 L-methionine + 2 reduced [2Fe-2S]-[ferredoxin]. It functions in the pathway protein modification; protein lipoylation via endogenous pathway; protein N(6)-(lipoyl)lysine from octanoyl-[acyl-carrier-protein]: step 2/2. Its function is as follows. Catalyzes the radical-mediated insertion of two sulfur atoms into the C-6 and C-8 positions of the octanoyl moiety bound to the lipoyl domains of lipoate-dependent enzymes, thereby converting the octanoylated domains into lipoylated derivatives. The sequence is that of Lipoyl synthase, mitochondrial from Meyerozyma guilliermondii (strain ATCC 6260 / CBS 566 / DSM 6381 / JCM 1539 / NBRC 10279 / NRRL Y-324) (Yeast).